The chain runs to 158 residues: Transcription elongation factor GreA (158 aa).

Belongs to the GreA/GreB family.

Functionally, necessary for efficient RNA polymerase transcription elongation past template-encoded arresting sites. The arresting sites in DNA have the property of trapping a certain fraction of elongating RNA polymerases that pass through, resulting in locked ternary complexes. Cleavage of the nascent transcript by cleavage factors such as GreA or GreB allows the resumption of elongation from the new 3'terminus. GreA releases sequences of 2 to 3 nucleotides. This Rhizobium etli (strain ATCC 51251 / DSM 11541 / JCM 21823 / NBRC 15573 / CFN 42) protein is Transcription elongation factor GreA.